The sequence spans 338 residues: MLIAQRPTLTEESISEFRSKFVIEPLEPGFGYTIGNSLRRTLLSSIPGASVTSIKIEGVQHEFSTIEGCVEDVTEIILNLKGLVLSSEEDEPVAMYLRKTGAGEITAADINPPAGVTIHNPELHIATLNDDGRFEMELIVERGRGYVSSALNDDPNAEIGRIAVDSIYSPVLKVTYKVEATRVEQRTDFDKLVVDVETKPSILPRDAIASAGKTLVELFGLTRELNVEAEGIEIGSGPVDEEYAESLGTPVEELNLTVRSYNCLKREGIHTVGELVSRSEQDLLAIRNFGSKSIDEVKEKLTELGLALKDSAPGFDPLAAAEAYDEANDDDYAETEQY.

Residues 1–226 (MLIAQRPTLT…ELFGLTRELN (226 aa)) are alpha N-terminal domain (alpha-NTD). Residues 243 to 338 (YAESLGTPVE…DDDYAETEQY (96 aa)) form an alpha C-terminal domain (alpha-CTD) region. The interval 319 to 338 (AAAEAYDEANDDDYAETEQY) is disordered. Residues 323–338 (AYDEANDDDYAETEQY) show a composition bias toward acidic residues.

The protein belongs to the RNA polymerase alpha chain family. Homodimer. The RNAP catalytic core consists of 2 alpha, 1 beta, 1 beta' and 1 omega subunit. When a sigma factor is associated with the core the holoenzyme is formed, which can initiate transcription.

It catalyses the reaction RNA(n) + a ribonucleoside 5'-triphosphate = RNA(n+1) + diphosphate. Its function is as follows. DNA-dependent RNA polymerase catalyzes the transcription of DNA into RNA using the four ribonucleoside triphosphates as substrates. This is DNA-directed RNA polymerase subunit alpha from Cutibacterium acnes (strain DSM 16379 / KPA171202) (Propionibacterium acnes).